A 449-amino-acid chain; its full sequence is Na(+)/H(+) antiporter NhaA 1 (449 aa).

The next 11 helical transmembrane spans lie at 38-58 (GILLALCAVAAMVWANSPWAA), 79-99 (FTIREFINDGLMTLFFFVVGM), 117-137 (VLPLIAAMGGMIVPAALYAAF), 145-165 (AGWAIPMATDIAFSIGCLTLV), 175-195 (VFLTALAIFDDIGGILVIALF), 198-218 (SGLHVSWLVGALGVLAVLACL), 240-260 (MHHGGIHATLSGVVLGLFMPA), 311-331 (FVHLWHVPVAYGIVPLFALAN), 347-367 (PLPLGIIAGLFVGKQVGIFLF), 390-410 (GVAVVAGIGFTVALFVAGLAF), and 422-442 (LGILVGSLLSAVVGYALLRFV).

It belongs to the NhaA Na(+)/H(+) (TC 2.A.33) antiporter family.

Its subcellular location is the cell inner membrane. The enzyme catalyses Na(+)(in) + 2 H(+)(out) = Na(+)(out) + 2 H(+)(in). Na(+)/H(+) antiporter that extrudes sodium in exchange for external protons. In Myxococcus xanthus (strain DK1622), this protein is Na(+)/H(+) antiporter NhaA 1.